The sequence spans 246 residues: Type III pantothenate kinase (246 aa).

6–13 (DVGNSRIK) provides a ligand contact to ATP. Substrate contacts are provided by residues Y93 and 100–103 (GSDR). The active-site Proton acceptor is D102. T125 provides a ligand contact to ATP. T175 serves as a coordination point for substrate.

This sequence belongs to the type III pantothenate kinase family. Homodimer. Requires NH4(+) as cofactor. K(+) is required as a cofactor.

Its subcellular location is the cytoplasm. It carries out the reaction (R)-pantothenate + ATP = (R)-4'-phosphopantothenate + ADP + H(+). It functions in the pathway cofactor biosynthesis; coenzyme A biosynthesis; CoA from (R)-pantothenate: step 1/5. Catalyzes the phosphorylation of pantothenate (Pan), the first step in CoA biosynthesis. The protein is Type III pantothenate kinase of Dichelobacter nodosus (strain VCS1703A).